We begin with the raw amino-acid sequence, 284 residues long: Bifunctional protein FolD (284 aa).

NADP(+) is bound by residues 166–168 (GAS) and I232.

Belongs to the tetrahydrofolate dehydrogenase/cyclohydrolase family. In terms of assembly, homodimer.

It catalyses the reaction (6R)-5,10-methylene-5,6,7,8-tetrahydrofolate + NADP(+) = (6R)-5,10-methenyltetrahydrofolate + NADPH. The enzyme catalyses (6R)-5,10-methenyltetrahydrofolate + H2O = (6R)-10-formyltetrahydrofolate + H(+). Its pathway is one-carbon metabolism; tetrahydrofolate interconversion. Catalyzes the oxidation of 5,10-methylenetetrahydrofolate to 5,10-methenyltetrahydrofolate and then the hydrolysis of 5,10-methenyltetrahydrofolate to 10-formyltetrahydrofolate. In Glaesserella parasuis serovar 5 (strain SH0165) (Haemophilus parasuis), this protein is Bifunctional protein FolD.